A 193-amino-acid chain; its full sequence is MLGLSATGVLVGGLWAWIAPPIHAVVAITRAGERVHEYLGSESQNFFIAPFMLLGLLSVLAVVASALMWQWREHRGPQMVAGLSIGLTTAAAIAAGVGALVVRLRYGALDFDTVPLSRGDHALTYVTQAPPVFFARRPLQIALTLMWPAGIASLVYALLAAGTARDDLGGYPAVDPSSNARTEALETPQAPVS.

4 helical membrane passes run 8 to 28 (GVLV…VVAI), 46 to 66 (FFIA…VASA), 82 to 102 (GLSI…ALVV), and 141 to 161 (IALT…LLAA).

This sequence to M.leprae ML1222.

It is found in the cell membrane. This is an uncharacterized protein from Mycobacterium tuberculosis (strain CDC 1551 / Oshkosh).